Reading from the N-terminus, the 1487-residue chain is Protein cft1 (1487 aa).

Residues 486–504 (DLDLDDEDLEDDDDDDLYG) are compositionally biased toward acidic residues. Positions 486–513 (DLDLDDEDLEDDDDDDLYGEESASPEQA) are disordered.

This sequence belongs to the CFT1 family.

Its subcellular location is the nucleus. RNA-binding component of the cleavage and polyadenylation factor (CPF) complex, which plays a key role in polyadenylation-dependent pre-mRNA 3'-end formation and cooperates with cleavage factors including the CFIA complex and hrp1/CFIB. Involved in poly(A) site recognition. May be involved in coupling transcription termination and mRNA 3'-end formation. This Neurospora crassa (strain ATCC 24698 / 74-OR23-1A / CBS 708.71 / DSM 1257 / FGSC 987) protein is Protein cft1 (paa-3).